A 271-amino-acid chain; its full sequence is Cyclic AMP-dependent transcription factor ATF-1 (271 aa).

Residues M1 to R61 are disordered. The 60-residue stretch at Q31 to A90 folds into the KID domain. Phosphoserine; by CaMK1, CDK3, RPS6KA4 and RPS6KA5 is present on S63. Residue S198 is modified to Phosphoserine; by HIPK2. Glycyl lysine isopeptide (Lys-Gly) (interchain with G-Cter in SUMO2) cross-links involve residues K208 and K215. Positions Q213–V271 constitute a bZIP domain. Residues K215–K239 form a basic motif region. Residues L241–L262 are leucine-zipper.

Belongs to the bZIP family. ATF subfamily. In terms of assembly, binds DNA as a dimer. Interacts with HIPK2 and CDK3. Interacts with MOTS-c, a peptide produced by the mitochondrially encoded 12S rRNA MT-RNR1; the interaction occurs in the nucleus following metabolic stress. In terms of processing, phosphorylated at Ser-198 by HIPK2 in response to genotoxic stress. This phosphorylation promotes transcription repression of FTH1 and other antioxidant detoxification genes. The CDK3-mediated phosphorylation at Ser-63 promotes its transactivation and transcriptional activities. Phosphorylated at Ser-63 by RPS6KA4 and RPS6KA5 in response to mitogenic or stress stimuli.

It is found in the nucleus. In terms of biological role, this protein binds the cAMP response element (CRE) (consensus: 5'-GTGACGT[AC][AG]-3'), a sequence present in many viral and cellular promoters. Binds to the Tax-responsive element (TRE) of HTLV-I. Mediates PKA-induced stimulation of CRE-reporter genes. Represses the expression of FTH1 and other antioxidant detoxification genes. Triggers cell proliferation and transformation. This is Cyclic AMP-dependent transcription factor ATF-1 (ATF1) from Homo sapiens (Human).